Consider the following 238-residue polypeptide: MKYIHILLVFIILSLFITVIKSNYYDNNNQNQNQYSYHHTYNNNNQGNYQSKNVHSESEQNSYNKETRNNNDDDDDDENFERNKKSIRSRYHGYTYRNDQIQSRGNSAKGGSYSESTYFTLHSGTDRYGRRNDYSRFQTRGRSNGYRENMFLNVFDVVGNIKTTRNKRKITKSEKNGRYIKKDHMNNRDSNTNINEKPEYSKSPVFQGGYRSLEKNFTTNYGNSSNASIPLSGKQSQL.

The segment covering 35–50 has biased composition (low complexity); that stretch reads YSYHHTYNNNNQGNYQ. 2 disordered regions span residues 35 to 112 and 166 to 204; these read YSYH…KGGS and NKRK…SKSP. A compositionally biased stretch (polar residues) spans 97–106; that stretch reads RNDQIQSRGN. The segment covering 171-187 has biased composition (basic and acidic residues); the sequence is TKSEKNGRYIKKDHMNN.

In terms of biological role, FS800 is likely to have some function in the production or maintenance of the schistosome egg. The polypeptide is Female-specific protein 800 (Schistosoma mansoni (Blood fluke)).